Reading from the N-terminus, the 357-residue chain is RNA 3'-terminal phosphate cyclase (357 aa).

Residues Gln102 and 293–296 (HMGD) each bind ATP. The active-site Tele-AMP-histidine intermediate is the His319.

The protein belongs to the RNA 3'-terminal cyclase family. Type 1 subfamily.

It localises to the cytoplasm. It catalyses the reaction a 3'-end 3'-phospho-ribonucleotide-RNA + ATP = a 3'-end 2',3'-cyclophospho-ribonucleotide-RNA + AMP + diphosphate. In terms of biological role, catalyzes the conversion of 3'-phosphate to a 2',3'-cyclic phosphodiester at the end of RNA. The mechanism of action of the enzyme occurs in 3 steps: (A) adenylation of the enzyme by ATP; (B) transfer of adenylate to an RNA-N3'P to produce RNA-N3'PP5'A; (C) and attack of the adjacent 2'-hydroxyl on the 3'-phosphorus in the diester linkage to produce the cyclic end product. The biological role of this enzyme is unknown but it is likely to function in some aspects of cellular RNA processing. The polypeptide is RNA 3'-terminal phosphate cyclase (Desulfurococcus amylolyticus (strain DSM 18924 / JCM 16383 / VKM B-2413 / 1221n) (Desulfurococcus kamchatkensis)).